The chain runs to 519 residues: Methionine--tRNA ligase (519 aa).

The short motif at 11–21 (AYPNAAPHVGH) is the 'HIGH' region element. Positions 299 to 303 (KMSKS) match the 'KMSKS' region motif. Position 302 (lysine 302) interacts with ATP. Positions 500–519 (LPPPTGVFPRYQPPQPPEGK) are disordered.

It belongs to the class-I aminoacyl-tRNA synthetase family. MetG type 2B subfamily. In terms of assembly, monomer.

Its subcellular location is the cytoplasm. It carries out the reaction tRNA(Met) + L-methionine + ATP = L-methionyl-tRNA(Met) + AMP + diphosphate. Is required not only for elongation of protein synthesis but also for the initiation of all mRNA translation through initiator tRNA(fMet) aminoacylation. The polypeptide is Methionine--tRNA ligase (Mycobacterium tuberculosis (strain ATCC 25618 / H37Rv)).